Here is a 2671-residue protein sequence, read N- to C-terminus: MAADTQVSETLKRFAVKVTTASVKERREILSELGRCIAGKDLPEGAVKGLCKLFCLTLHRYRDAASRRALQAAIQQLAEAQPEATAKNLLHSLQSSGVGSKACVPSKSSGSAALLALTWTCLLVRIVFPLKAKRQGDIWNKLVEVQCLLLLEVLGGSHKHAVDGAVKKLTKLWKENPGLVEQYFSAILSLEPSQNYAAMLGLLVQFCTNHKEMDAVSQHKSTLLEFYVKNILMSKAKPPKYLLDNCAPLLRFMSHSEFKDLILPTIQKSLLRSPENVIETISSLLASVTLDLSQYALDIVKGLANQLKSNSPRLMDEAVLALRNLARQCSDSSATEALTKHLFAILGGSEGKLTIIAQKMSVLSGIGSLSHHVVSGPSGQVLNGCVAELFIPFLQQEVHEGTLVHAVSILALWCNRFTTEVPKKLTDWFKKVFSLKTSTSAVRHAYLQCMLASFRGDTLLQALDFLPLLMQTVEKAASQGTQVPTVTEGVAAALLLSKLSVADAQAEAKLSGFWQLVVDEKRQTFTSEKFLLLASEDALCTVLRLTERLFLDHPHRLTNSKVQQYYRVLVAVLLSRTWHVRRQAQQTVRKLLSSLGGVKLANGLLDELKTVLNSHKVLPLEALVTDAGEVTEMGKTYVPPRVLQEALCVISGVPGLKGDIPSTEQLAQEMLIISHHPSLVAVQSGLWPALLTRMKIDPDAFITRHLDQIIPRITTQSPLNQSSMNAMGSLSVLSPDRVLPQLISTITASVQNPALCLVTREEFSIMQTPAGELFDKSIIQSAQQDSIKKANMKRENKAYSFKEQIIEMELKEEIKKKKGIKEEVQLTSKQKEMLQAQMDKEAQIRRRLQELDGELEAALGLLDAIMARNPCGLIQYIPVLVDAFLPLLKSPLAAPRVKGPFLSLAACVMPPRLKTLGTLVSHVTLRLLKPECALDKSWCQEELPVAVRRAVSLLHTHTIPSRVGKGEPDAAPLSAPAFSLVFPMLKMVLTEMPYHSEEEEEQMAQILQILTVHAQLRASPDTPPERVDENGPELLPRVAMLRLLTWVIGTGSPRLQVLASDTLTALCASSSGEDGCAFAEQEEVDVLLAALQSPCASVRETALRGLMELRLVLPSPDTDEKSGLSLLRRLWVIKFDKEDEIRKLAERLWSTMGLDLQSDLCSLLIDDVIYHEAAVRQAGAEALSQAVARYQRQAAEVMGRLMEIYQEKLYRPPPVLDALGRVISESPPDQWEARCGLALALNKLSQYLDSSQVKPLFQFFVPDALNDRNPDVRKCMLDAALATLNAHGKENVNSLLPVFEEFLKDAPNDASYDAVRQSVVVLMGSLAKHLDKSDPKVKPIVAKLIAALSTPSQQVQESVASCLPPLVPAVKEDAGGMIQRLMQQLLESDKYAERKGAAYGLAGLVKGLGILSLKQQEMMAALTDAIQDKKNFRRREGALFAFEMLCTMLGKLFEPYVVHVLPHLLLCFGDGNQYVREAADDCAKAVMSNLSAHGVKLVLPSLLAALEEESWRTKAGSVELLGAMAYCAPKQLSSCLPNIVPKLTEVLTDSHVKVQKAGQQALRQIGSVIRNPEILAIAPVLLDALTDPSRKTQKCLQTLLDTKFVHFIDAPSLALIMPIVQRAFQDRSTDTRKMAAQIIGNMYSLTDQKDLAPYLPSVTPGLKASLLDPVPEVRTVSAKALGAMVKGMGESCFEDLLPWLMETLTYEQSSVDRSGAAQGLAEVMAGLGVEKLEKLMPEIVATASKVDIAPHVRDGYIMMFNYLPITFGDKFTPYVGPIIPCILKALADENEFVRDTALRAGQRVISMYAETAIALLLPQLEQGLFDDLWRIRFSSVQLLGDLLFHISGVTGKMTTETASEDDNFGTAQSNKAIITALGVDRRNRVLAGLYMGRSDTQLVVRQASLHVWKIVVSNTPRTLREILPTLFGLLLGFLASTCADKRTIAARTLGDLVRKLGEKILPEIIPILEEGLRSQKSDERQGVCIGLSEIMKSTSRDAVLFFSESLVPTARKALCDPLEEVREAAAKTFEQLHSTIGHQALEDILPFLLKQLDDEEVSEFALDGLKQVMAVKSRVVLPYLVPKLTTPPVNTRVLAFLSSVAGDALTRHLGVILPAVMLALKEKLGTPDEQLEMANCQAVILSVEDDTGHRIIIEDLLEATRSPEVGMRQAAAIILNMYCSRSKADYSSHLRSLVSGLIRLFNDSSPVVLEESWDALNAITKKLDAGNQLALIEELHKEIRFIGNECKGEHVPGFCLPKRGVTSILPVLREGVLTGSPEQKEEAAKGLGLVIRLTSADALRPSVVSITGPLIRILGDRFNWTVKAALLETLSLLLGKVGIALKPFLPQLQTTFTKALQDSNRGVRLKAADALGKLISIHVKVDPLFTELLNGIRAVEDPGIRDTMLQALRFVIQGAGSKVDAAIRKNLVSLLLSMLGHDEDNTRISTAGCLGELCAFLTDEELNTVLQQCLLADVSGIDWMVRHGRSLALSVAVNVAPSRLCAGRYSNEVQDMILSNAVADRIPIAMSGIRGMGFLMKYHIETGSGQLPPRLSSLLIKCLQNPCSDIRLVAEKMIWWANKEPRPPLEPQTIKPILKALLDNTKDKNTVVRAYSDQAIVNLLKMRRGEELLQSLSKILDVASLEALNECSRRSLRKLACQADSVEQVDDTILT.

A2 carries the N-acetylalanine modification. 10 HEAT repeats span residues 140-178, 257-293, 294-331, 385-423, 425-459, 460-500, 560-597, 599-636, 700-732, and 733-772; these read NKLV…ENPG, EFKD…LDLS, QYAL…QCSD, CVAE…EVPK, LTDW…GDTL, LQAL…SKLS, SKVQ…SLGG, KLAN…MGKT, AFIT…SLSV, and LSPD…PAGE. The residue at position 729 (S729) is a Phosphoserine. S786 is modified (phosphoserine). Residues 804–865 are a coiled coil; sequence QIIEMELKEE…EAALGLLDAI (62 aa). HEAT repeat units follow at residues 879–918, 979–1016, 1035–1072, 1078–1115, 1155–1192, 1210–1250, 1251–1289, 1290–1332, 1335–1372, 1374–1410, 1413–1451, 1455–1492, 1493–1530, 1534–1571, 1573–1609, 1611–1648, 1653–1690, 1692–1729, 1731–1769, 1773–1810, 1812–1848, 1921–1958, 1959–1996, 2001–2038, 2039–2074, 2076–2108, 2111–2146, 2147–2184, 2188–2225, 2259–2296, 2301–2338, 2339–2380, 2382–2417, 2422–2459, 2546–2583, 2588–2625, and 2627–2661; these read VLVD…TLGT, SLVF…HAQL, LPRV…SSSG, FAEQ…VLPS, DLQS…RYQR, YRPP…YLDS, SQVK…AHGK, ENVN…HLDK, PKVK…AVKE, AGGM…GLGI, LKQQ…MLGK, PYVV…NLSA, HGVK…CAPK, SCLP…VIRN, EILA…HFID, PSLA…LTDQ, PYLP…GMGE, CFED…GLGV, KLEK…TFGD, PYVG…MYAE, AIAL…HISG, EILP…KLGE, KILP…STSR, FFSE…TIGH, QALE…VKSR, VLPY…LTRH, VILP…VEDD, TGHR…RSKA, SHLR…KLDA, RGVT…LTSA, PSVV…GKVG, IALK…IHVK, DPLF…GAGS, AIRK…FLTD, QLPP…EPRP, QTIK…MRRG, and ELLQ…QADS. Residues 2260 to 2408 are RWDBD region; it reads GVTSILPVLR…GIRDTMLQAL (149 aa). S2276 carries the phosphoserine modification.

The protein belongs to the GCN1 family. Interacts with EIF2AK4/GCN2; this interaction stimulates the EIF2AK4/GCN2 kinase activity and is impaired by IMPACT upon a variety of stress conditions, such as amino acid depletion, UV-C irradiation, proteasome inhibitor treatment and glucose deprivation. Interacts with IMPACT; this prevents the interaction of GCN1 with EIF2AK4/GCN2 and inhibits EIF2AK4/GCN2 kinase activity. Interacts with RNF14; interaction takes place following ribosome stalling and promotes recruitment of RNF14. As to expression, expressed in the hypothalamus, cortex and hippocampus.

Its subcellular location is the cytoplasm. Ribosome collision sensor that plays a key role in the RNF14-RNF25 translation quality control pathway, a pathway that takes place when a ribosome has stalled during translation, and which promotes ubiquitination and degradation of translation factors on stalled ribosomes. Directly binds to the ribosome and acts as a sentinel for colliding ribosomes: activated following ribosome stalling and promotes recruitment of RNF14, which directly ubiquitinates EEF1A1/eEF1A, leading to its degradation. In addition to EEF1A1/eEF1A, the RNF14-RNF25 translation quality control pathway mediates degradation of ETF1/eRF1 and ubiquitination of ribosomal protein. GCN1 also acts as a positive activator of the integrated stress response (ISR) by mediating activation of EIF2AK4/GCN2 in response to amino acid starvation. Interaction with EIF2AK4/GCN2 on translating ribosomes stimulates EIF2AK4/GCN2 kinase activity, leading to phosphorylation of eukaryotic translation initiation factor 2 (eIF-2-alpha/EIF2S1). EIF2S1/eIF-2-alpha phosphorylation converts EIF2S1/eIF-2-alpha into a global protein synthesis inhibitor, leading to a global attenuation of cap-dependent translation, and thus to a reduced overall utilization of amino acids, while concomitantly initiating the preferential translation of ISR-specific mRNAs, such as the transcriptional activator ATF4, and hence allowing ATF4-mediated reprogramming of amino acid biosynthetic gene expression to alleviate nutrient depletion. The protein is Stalled ribosome sensor GCN1 of Mus musculus (Mouse).